We begin with the raw amino-acid sequence, 264 residues long: ATP synthase subunit a (264 aa).

6 consecutive transmembrane segments (helical) span residues 29-49, 89-109, 134-154, 177-197, 208-228, and 235-255; these read TWHI…LWLF, VIAP…FMDM, DLNI…YYSI, IPVN…SLAL, LIFI…TLGV, and LIFH…LTIV.

The protein belongs to the ATPase A chain family. F-type ATPases have 2 components, CF(1) - the catalytic core - and CF(0) - the membrane proton channel. CF(1) has five subunits: alpha(3), beta(3), gamma(1), delta(1), epsilon(1). CF(0) has three main subunits: a(1), b(2) and c(9-12). The alpha and beta chains form an alternating ring which encloses part of the gamma chain. CF(1) is attached to CF(0) by a central stalk formed by the gamma and epsilon chains, while a peripheral stalk is formed by the delta and b chains.

It localises to the cell inner membrane. Its function is as follows. Key component of the proton channel; it plays a direct role in the translocation of protons across the membrane. The chain is ATP synthase subunit a from Shewanella woodyi (strain ATCC 51908 / MS32).